Reading from the N-terminus, the 467-residue chain is MLMSWSPEECKGQGEPLDDRHPLCARLVEKPSRGSEEHLKSGPGPIVTRTASGPALAFWQAVLAGDVGCVSRILADSSTGLAPDSVFDTSDPERWRDFRFNIRALRLWSLTYEEELTTPLHVAASRGHTEVLRLLLRRRARPDSAPGGRTALHEACAAGHTACVHVLLVAGADPNIADQDGKRPLHLCRGPGTLECAELLLRFGARVDGRSEEEEETPLHVAARLGHVELADLLLRRGACPDARNAEGWTPLLAACDVRCQSITDAEATTARCLQLCSLLLSAGADADAADQDKQRPLHLACRRGHAAVVELLLSCGVSANTMDYGGHTPLHCALQGPAAALAQSPEHVVRALLNHGAVRVWPGALPKVLERWSTCPRTIEVLMNTYSVVQLPEEAVGLVTPETLQKHQRFYSSLFALVRQPRSLQHLSRCALRSHLEGSLPQALPRLPLPPRLLRYLQLDFEGVLY.

ANK repeat units lie at residues E115–S144, G147–I176, D180–G209, E214–A243, E247–A289, D293–T322, and G326–V361. In terms of domain architecture, SOCS box spans Y412 to G464.

The protein belongs to the ankyrin SOCS box (ASB) family. In terms of tissue distribution, expressed in the eye. The highest expression is observed in the iris, with moderate levels in the trabecular meshwork (TM), the lamina, and the optic nerve; slightly lower levels in the ciliary body, retina, and choroid; and very low levels in the lens.

The protein localises to the cytoplasm. It is found in the nucleus. It participates in protein modification; protein ubiquitination. In terms of biological role, may be a substrate-recognition component of a SCF-like ECS (Elongin-Cullin-SOCS-box protein) E3 ubiquitin-protein ligase complex which mediates the ubiquitination and subsequent proteasomal degradation of target proteins. This chain is Ankyrin repeat and SOCS box protein 10 (ASB10), found in Homo sapiens (Human).